An 880-amino-acid polypeptide reads, in one-letter code: Endoglucanase E-4 (880 aa).

A signal peptide spans 1 to 46; the sequence is MSVTEPPPRRRGRHSRARRFLTSLGATAALTAGMLGVPLATGTAHA. Asp-104 serves as the catalytic Nucleophile. Residues His-422, His-427, Asp-461, and Glu-470 contribute to the active site. The region spanning 504–652 is the CBM3 domain; sequence PDGPEIFVEA…GVPVWGTAPE (149 aa). The disordered stretch occupies residues 647-688; sequence WGTAPEEGEEPGGGEGPGGGEEPGEDVTPPSAPGSPAVRDVT. Positions 678–770 constitute a Fibronectin type-III domain; the sequence is APGSPAVRDV…TVSFTTLAEN (93 aa). In terms of domain architecture, CBM2 spans 771–880; that stretch reads GGGPDASCTV…TLNGEPCALA (110 aa).

The protein belongs to the glycosyl hydrolase 9 (cellulase E) family.

It carries out the reaction Endohydrolysis of (1-&gt;4)-beta-D-glucosidic linkages in cellulose, lichenin and cereal beta-D-glucans.. Its pathway is glycan metabolism; cellulose degradation. The chain is Endoglucanase E-4 (celD) from Thermobifida fusca (Thermomonospora fusca).